The following is an 89-amino-acid chain: Large ribosomal subunit protein bL27 (89 aa).

Belongs to the bacterial ribosomal protein bL27 family.

The protein is Large ribosomal subunit protein bL27 of Ruegeria sp. (strain TM1040) (Silicibacter sp.).